The primary structure comprises 291 residues: Flap endonuclease (291 aa).

Residues 82–116 (YKGNRDEKYAQRTEEEKALDEQFFEYLKDAFELCK) form a helical arch region. Lysine 83 lines the DNA pocket. Residues aspartate 130, aspartate 153, aspartate 155, and aspartate 201 each contribute to the Mg(2+) site. Residues 188 to 224 (DVEQFISLKAIMGDLGDNIRGVEGIGAKRGYNIIREF) are DNA-binding; H3TH. The region spanning 190-263 (EQFISLKAIM…FRNLILVDLP (74 aa)) is the 5'-3' exonuclease domain. K(+) is bound by residues valine 209 and isoleucine 212.

It depends on Mg(2+) as a cofactor. K(+) is required as a cofactor.

It carries out the reaction Exonucleolytic cleavage in the 5'- to 3'-direction to yield nucleoside 5'-phosphates.. With respect to regulation, inhibited by p-hydroxymercuribenzoate (PHMB). Functionally, catalyzes both the 5'-exonucleolytic and structure-specific endonucleolytic hydrolysis of DNA branched nucleic acid molecules and probably plays a role in viral genome replication. Active on flap (branched duplex DNA containing a free single-stranded 5'-end), 5'overhangs and pseudo-Y structures. The substrates require a free, single-stranded 5' end, with endonucleolytic hydrolysis occurring at the junction of double- and single-stranded DNA. This function may be used for example to trim such branched molecules generated by Okazaki fragments synthesis during replication. In Escherichia phage T5 (Enterobacteria phage T5), this protein is Flap endonuclease (D15).